Here is a 137-residue protein sequence, read N- to C-terminus: ATP synthase epsilon chain (137 aa).

The protein belongs to the ATPase epsilon chain family. In terms of assembly, F-type ATPases have 2 components, CF(1) - the catalytic core - and CF(0) - the membrane proton channel. CF(1) has five subunits: alpha(3), beta(3), gamma(1), delta(1), epsilon(1). CF(0) has three main subunits: a, b and c.

It is found in the cellular thylakoid membrane. Functionally, produces ATP from ADP in the presence of a proton gradient across the membrane. The chain is ATP synthase epsilon chain from Nostoc punctiforme (strain ATCC 29133 / PCC 73102).